Reading from the N-terminus, the 1202-residue chain is Calmodulin-binding transcription activator 2 (1202 aa).

The segment at residues 30 to 155 (RCPLLPPERL…YLNVPALEDC (126 aa)) is a DNA-binding region (CG-1). Residues 79–86 (RKKVKYRK) carry the Nuclear localization signal motif. Disordered regions lie at residues 263–322 (SIPH…SRGG), 361–409 (GTEP…AHTP), and 421–491 (PQAA…LFGG). Residues 270–283 (PEPPPLIAPLPPEL) are compositionally biased toward pro residues. Low complexity-rich tracts occupy residues 289–299 (SPSSSSSSSSS) and 313–322 (TSRGGSSRGG). Composition is skewed to pro residues over residues 365–374 (SAPPAPPSPA) and 460–476 (PPIPSPPPSPPPSPAPL). The IPT/TIG domain maps to 537 to 615 (DFSPEWSYPE…LSASVLFEYR (79 aa)). 3 ANK repeats span residues 712 to 745 (MSLLHLAAAQGYARLIETLSQWRSVETGSLDLEQ), 757 to 787 (CTPLMWACALGHLEAAVLLFRWNRQALSIPD), and 791 to 821 (RLPLSVAHSRGHVRLARCLEELQRQEPSVEP). Disordered regions lie at residues 817–874 (PSVE…ASEM) and 906–929 (PLSSLPALPPASDDGAAPEDADSP). Composition is skewed to low complexity over residues 826 to 846 (SPPSSSPDTGLSSVSSPSELS) and 906 to 917 (PLSSLPALPPAS). IQ domains are found at residues 1049 to 1078 (YEAARVIQTAFRKYKGRRLKEQQEVAAAVI) and 1102 to 1131 (TQAAILIQSKFRSYYEQKRFQQSRRAAVLI).

Belongs to the CAMTA family. May interact with calmodulin. Detected in brain. Expressed at constant levels throughout the cell cycle in neuroblastoma cell lines.

The protein resides in the nucleus. Transcription activator. May act as tumor suppressor. The chain is Calmodulin-binding transcription activator 2 (CAMTA2) from Homo sapiens (Human).